Here is a 173-residue protein sequence, read N- to C-terminus: MYLDYLVLGAGASKFNNGDIIATLAIFLVLMFLLKKVAWGPLMGIMQQREELVASEIEAAEKARKESHQFLEEQKSLLKEARTEAQSIVEGAKKQGELQKDEILTAARNEANRLKESALREIESEKEKAIAAVRDEVVSLSVLAASKVLSKEISEADNRALIEETIAKAGEAR.

Residues 20–40 (IIATLAIFLVLMFLLKKVAWG) traverse the membrane as a helical segment.

The protein belongs to the ATPase B chain family. In terms of assembly, F-type ATPases have 2 components, F(1) - the catalytic core - and F(0) - the membrane proton channel. F(1) has five subunits: alpha(3), beta(3), gamma(1), delta(1), epsilon(1). F(0) has three main subunits: a(1), b(2) and c(10-14). The alpha and beta chains form an alternating ring which encloses part of the gamma chain. F(1) is attached to F(0) by a central stalk formed by the gamma and epsilon chains, while a peripheral stalk is formed by the delta and b chains.

The protein resides in the cell membrane. Functionally, f(1)F(0) ATP synthase produces ATP from ADP in the presence of a proton or sodium gradient. F-type ATPases consist of two structural domains, F(1) containing the extramembraneous catalytic core and F(0) containing the membrane proton channel, linked together by a central stalk and a peripheral stalk. During catalysis, ATP synthesis in the catalytic domain of F(1) is coupled via a rotary mechanism of the central stalk subunits to proton translocation. In terms of biological role, component of the F(0) channel, it forms part of the peripheral stalk, linking F(1) to F(0). The chain is ATP synthase subunit b from Lysinibacillus sphaericus (strain C3-41).